The primary structure comprises 645 residues: Mediator of RNA polymerase II transcription subunit 17 (645 aa).

The segment at 215 to 234 (KAEDEESGSPPASPSGSGAA) is disordered. A compositionally biased stretch (low complexity) spans 222 to 234 (GSPPASPSGSGAA).

It belongs to the Mediator complex subunit 17 family. As to quaternary structure, component of the Mediator complex.

Its subcellular location is the nucleus. Functionally, component of the Mediator complex, a coactivator involved in the regulated transcription of nearly all RNA polymerase II-dependent genes. Mediator functions as a bridge to convey information from gene-specific regulatory proteins to the basal RNA polymerase II transcription machinery. Mediator is recruited to promoters by direct interactions with regulatory proteins and serves as a scaffold for the assembly of a functional preinitiation complex with RNA polymerase II and the general transcription factors. This is Mediator of RNA polymerase II transcription subunit 17 (MED17) from Anopheles gambiae (African malaria mosquito).